A 468-amino-acid polypeptide reads, in one-letter code: Cysteine--tRNA ligase (468 aa).

C33 is a binding site for Zn(2+). Residues 35-45 carry the 'HIGH' region motif; the sequence is ATVQGLPHIGH. C211, H236, and E240 together coordinate Zn(2+). A 'KMSKS' region motif is present at residues 267–271; that stretch reads KMSKS. K270 lines the ATP pocket.

The protein belongs to the class-I aminoacyl-tRNA synthetase family. In terms of assembly, monomer. It depends on Zn(2+) as a cofactor.

The protein resides in the cytoplasm. It carries out the reaction tRNA(Cys) + L-cysteine + ATP = L-cysteinyl-tRNA(Cys) + AMP + diphosphate. The sequence is that of Cysteine--tRNA ligase from Mycobacterium ulcerans (strain Agy99).